A 757-amino-acid chain; its full sequence is Myb-related protein A (757 aa).

3 consecutive HTH myb-type domains span residues 30-81, 82-137, and 138-188; these read KKIC…QKVL, NPEL…NPEV, and KKSS…RRKV. 3 DNA-binding regions (H-T-H motif) span residues 58-81, 110-133, and 161-184; these read WAFIASHLQNRSDFQCQHRWQKVL, WSLIAKHLKGRIGKQCRERWHNHL, and WAEIAKLLPGRTDNSIKNHWNSTM. The interval 187–209 is disordered; that stretch reads KVEQEGYLQDGTKSSSERTGSST. Over residues 197 to 209 the composition is skewed to polar residues; sequence GTKSSSERTGSST. The tract at residues 235–300 is transcriptional activation domain; the sequence is IPVYQYASPE…RLSSQAGSLP (66 aa). A negative regulatory domain region spans residues 303–558; that stretch reads SGSFVMEDCV…IRRSLLGSTP (256 aa).

In terms of assembly, component of the DREAM complex. Expressed ubiquitously.

Its subcellular location is the nucleus. Its function is as follows. Strong transcriptional activator; DNA-binding protein that specifically recognize the sequence 5'-YAAC[GT]G-3'. Could have a role in the proliferation and/or differentiation of neurogenic, spermatogenic and B-lymphoid cells. This is Myb-related protein A (MYBL1) from Gallus gallus (Chicken).